Here is a 375-residue protein sequence, read N- to C-terminus: uncharacterized protein (375 aa).

The GP-PDE domain occupies 52-301 (VLLSAHRGSW…KQGFATYHES (250 aa)).

This is an uncharacterized protein from Sinorhizobium fredii (strain NBRC 101917 / NGR234).